Here is a 431-residue protein sequence, read N- to C-terminus: Adenylosuccinate synthetase (431 aa).

Residues 15 to 21 (GDEGKGK) and 43 to 45 (GHT) each bind GTP. The active-site Proton acceptor is the D16. The Mg(2+) site is built by D16 and G43. IMP-binding positions include 16-19 (DEGK), 41-44 (NAGH), T135, R149, N227, T242, and R306. H44 functions as the Proton donor in the catalytic mechanism. 302–308 (VTTGRKR) serves as a coordination point for substrate. Residues R308, 334-336 (KLD), and 416-418 (GVG) contribute to the GTP site.

This sequence belongs to the adenylosuccinate synthetase family. As to quaternary structure, homodimer. Mg(2+) is required as a cofactor.

It localises to the cytoplasm. It catalyses the reaction IMP + L-aspartate + GTP = N(6)-(1,2-dicarboxyethyl)-AMP + GDP + phosphate + 2 H(+). It functions in the pathway purine metabolism; AMP biosynthesis via de novo pathway; AMP from IMP: step 1/2. In terms of biological role, plays an important role in the de novo pathway and in the salvage pathway of purine nucleotide biosynthesis. Catalyzes the first committed step in the biosynthesis of AMP from IMP. This chain is Adenylosuccinate synthetase, found in Monosiga brevicollis (Choanoflagellate).